The following is a 1379-amino-acid chain: DNA-directed RNA polymerase subunit beta (1379 aa).

The protein belongs to the RNA polymerase beta chain family. In terms of assembly, in plastids the minimal PEP RNA polymerase catalytic core is composed of four subunits: alpha, beta, beta', and beta''. When a (nuclear-encoded) sigma factor is associated with the core the holoenzyme is formed, which can initiate transcription.

It localises to the plastid. Its subcellular location is the chloroplast. It carries out the reaction RNA(n) + a ribonucleoside 5'-triphosphate = RNA(n+1) + diphosphate. In terms of biological role, DNA-dependent RNA polymerase catalyzes the transcription of DNA into RNA using the four ribonucleoside triphosphates as substrates. The chain is DNA-directed RNA polymerase subunit beta from Trieres chinensis (Marine centric diatom).